Here is a 490-residue protein sequence, read N- to C-terminus: Fumitremorgin C monooxygenase (490 aa).

Residues 12 to 32 (LGVVGASLIVILGIILLFPLG) form a helical membrane-spanning segment. A heme-binding site is contributed by C442.

The protein belongs to the cytochrome P450 family. It depends on heme as a cofactor.

The protein localises to the membrane. The enzyme catalyses fumitremorgin C + 2 reduced [NADPH--hemoprotein reductase] + 2 O2 = 12alpha,13alpha-dihydroxyfumitremorgin C + 2 oxidized [NADPH--hemoprotein reductase] + 2 H2O + 2 H(+). The protein operates within mycotoxin biosynthesis. Its function is as follows. Cytochrome P450 monooxygenase; part of the gene cluster that mediates the biosynthesis of fumitremorgins, indole alkaloids that carry not only intriguing chemical structures, but also interesting biological and pharmacological activities. The biosynthesis of fumitremorgin-type alkaloids begins by condensation of the two amino acids L-tryptophan and L-proline to brevianamide F, catalyzed by the non-ribosomal peptide synthetase ftmA. Brevianamide F is then prenylated by the prenyltransferase ftmPT1/ftmB in the presence of dimethylallyl diphosphate, resulting in the formation of tryprostatin B. The three cytochrome P450 monooxygenases, ftmP450-1/ftmC, ftmP450-2/ftmE and ftmP450-3/FtmG, are responsible for the conversion of tryprostatin B to 6-hydroxytryprostatin B, tryprostatin A to fumitremorgin C and fumitremorgin C to 12,13-dihydroxyfumitremorgin C, respectively. The putative methyltransferase ftmMT/ftmD is expected for the conversion of 6-hydroxytryprostatin B to tryprostatin A. FtmPT2/FtmH catalyzes the prenylation of 12,13-dihydroxyfumitre-morgin C in the presence of dimethylallyl diphosphate, resulting in the formation of fumitremorgin B. Fumitremorgin B is further converted to verruculogen by ftmOx1/ftmF via the insertion of an endoperoxide bond between the two prenyl moieties. In some fungal species, verruculogen is further converted to fumitremorgin A, but the enzymes involved in this step have not been identified yet. The sequence is that of Fumitremorgin C monooxygenase from Aspergillus fumigatus (strain ATCC MYA-4609 / CBS 101355 / FGSC A1100 / Af293) (Neosartorya fumigata).